The following is a 219-amino-acid chain: MSLGLVGRKVGMTRIFTAEGDSIPVTVLDVSDNRVTQIKTVETDGYTAVQVAFGSRRASRVTKPLAGHLAKAGVEAGEILKEFRIEADKAAELSNGAVIGPDLFEVGQKVDVQGVSIGKGYAGTIKRYNFGSGRASHGNSRSHNVPGSIGMAQDPGRVFPGKRMTGHMGDETVTVQNLEIARIDADRKLLLVKGAVPGAKGGKVFVTPAVKTRAVKGAK.

Residues 133-153 form a disordered region; that stretch reads GRASHGNSRSHNVPGSIGMAQ. Gln-153 is modified (N5-methylglutamine).

Belongs to the universal ribosomal protein uL3 family. Part of the 50S ribosomal subunit. Forms a cluster with proteins L14 and L19. Post-translationally, methylated by PrmB.

Functionally, one of the primary rRNA binding proteins, it binds directly near the 3'-end of the 23S rRNA, where it nucleates assembly of the 50S subunit. The protein is Large ribosomal subunit protein uL3 of Burkholderia mallei (strain NCTC 10247).